We begin with the raw amino-acid sequence, 474 residues long: tRNA-2-methylthio-N(6)-dimethylallyladenosine synthase (474 aa).

The MTTase N-terminal domain occupies 3–120 (KKLHIKTWGC…LPEMINSVRG (118 aa)). The [4Fe-4S] cluster site is built by Cys12, Cys49, Cys83, Cys157, Cys161, and Cys164. The region spanning 143–375 (RADGPTAFVS…QDRINQQTTA (233 aa)) is the Radical SAM core domain. Residues 378-441 (RRKLGTVQRI…ANSLRGMLLR (64 aa)) form the TRAM domain.

This sequence belongs to the methylthiotransferase family. MiaB subfamily. As to quaternary structure, monomer. [4Fe-4S] cluster is required as a cofactor.

Its subcellular location is the cytoplasm. It catalyses the reaction N(6)-dimethylallyladenosine(37) in tRNA + (sulfur carrier)-SH + AH2 + 2 S-adenosyl-L-methionine = 2-methylsulfanyl-N(6)-dimethylallyladenosine(37) in tRNA + (sulfur carrier)-H + 5'-deoxyadenosine + L-methionine + A + S-adenosyl-L-homocysteine + 2 H(+). Functionally, catalyzes the methylthiolation of N6-(dimethylallyl)adenosine (i(6)A), leading to the formation of 2-methylthio-N6-(dimethylallyl)adenosine (ms(2)i(6)A) at position 37 in tRNAs that read codons beginning with uridine. The protein is tRNA-2-methylthio-N(6)-dimethylallyladenosine synthase of Erwinia tasmaniensis (strain DSM 17950 / CFBP 7177 / CIP 109463 / NCPPB 4357 / Et1/99).